The sequence spans 337 residues: Mediator of RNA polymerase II transcription subunit 19 (337 aa).

Disordered regions lie at residues 1–38 (MMSN…KTTI), 155–234 (YVTP…LPGG), and 297–337 (QMSS…MSQF). The segment covering 28–38 (QDSSGTLKTTI) has biased composition (polar residues). 2 stretches are compositionally biased toward basic residues: residues 159–171 (ARKH…KQKH) and 208–221 (RKKR…KKKN). A coiled-coil region spans residues 189–223 (LETYEKKHKKQKRHEDDKERKKRKKEKKRKKKNQS). A compositionally biased stretch (low complexity) spans 297-309 (QMSSGGLLGSVLG). Residues 310–330 (TSGGPGGGGGGGGGGGGGVGG) show a composition bias toward gly residues.

The protein belongs to the Mediator complex subunit 19 family. In terms of assembly, component of the Mediator complex.

Its subcellular location is the nucleus. Functionally, component of the Mediator complex, a coactivator involved in the regulated transcription of nearly all RNA polymerase II-dependent genes. Mediator functions as a bridge to convey information from gene-specific regulatory proteins to the basal RNA polymerase II transcription machinery. Mediator is recruited to promoters by direct interactions with regulatory proteins and serves as a scaffold for the assembly of a functional preinitiation complex with RNA polymerase II and the general transcription factors. The sequence is that of Mediator of RNA polymerase II transcription subunit 19 (MED19) from Drosophila melanogaster (Fruit fly).